The sequence spans 313 residues: Probable pyridoxal 5'-phosphate synthase subunit PDX1.2 (313 aa).

Aspartate 42 serves as a coordination point for D-ribose 5-phosphate. Residue lysine 99 is the Schiff-base intermediate with D-ribose 5-phosphate of the active site. Glycine 171 serves as a coordination point for D-ribose 5-phosphate. Arginine 183 is a binding site for D-glyceraldehyde 3-phosphate. D-ribose 5-phosphate-binding positions include glycine 232 and 253 to 254 (GS).

It belongs to the PdxS/SNZ family.

It catalyses the reaction aldehydo-D-ribose 5-phosphate + D-glyceraldehyde 3-phosphate + L-glutamine = pyridoxal 5'-phosphate + L-glutamate + phosphate + 3 H2O + H(+). Its pathway is cofactor biosynthesis; pyridoxal 5'-phosphate biosynthesis. Functionally, catalyzes the formation of pyridoxal 5'-phosphate from ribose 5-phosphate (RBP), glyceraldehyde 3-phosphate (G3P) and ammonia. The ammonia is provided by PDX2. Can also use ribulose 5-phosphate and dihydroxyacetone phosphate as substrates, resulting from enzyme-catalyzed isomerization of RBP and G3P, respectively. Also plays an indirect role in resistance to singlet oxygen-generating photosensitizers. The sequence is that of Probable pyridoxal 5'-phosphate synthase subunit PDX1.2 (PDX12) from Oryza sativa subsp. japonica (Rice).